The primary structure comprises 489 residues: MKIKTIKRSADDYVPVKSTQESQMPRNLNPELHPFERAREYTKALNATKLERMFAKPFVGQLGYGHRDGVYAIAKNYGSLNKLATGSADGVIKYWNMSTREEFVSFKAHYGLVTGLCVTQPRFHDKKPDLKSQNFMLSCSDDKTVKLWSINVDDYSNKNSSDNDSVTNEEGLIRTFDGESAFQGIDSHRENSTFATGGAKIHLWDVNRLKPVSDLSWGADNITSLKFNQNETDILASTGSDNSIVLYDLRTNSPTQKIVQTMRTNAICWNPMEAFNFVTANEDHNAYYYDMRNLSRSLNVFKDHVSAVMDVDFSPTGDEIVTGSYDKSIRIYKTNHGHSREIYHTKRMQHVFQVKYSMDSKYIISGSDDGNVRLWRSKAWERSNVKTTREKNKLEYDEKLKERFRHMPEIKRISRHRHVPQVIKKAQEIKNIELSSIKRREANERRTRKDMPYISERKKQIVGTVHKYEDSGRDRKRRKEDDKRDTQEK.

WD repeat units lie at residues glycine 65–serine 105, valine 113–lysine 158, aspartate 177–aspartate 214, tryptophan 217–lysine 257, valine 259–asparagine 299, aspartate 303–isoleucine 342, and lysine 346–valine 385. Basic and acidic residues-rich tracts occupy residues arginine 440–lysine 459 and histidine 466–lysine 489. The disordered stretch occupies residues arginine 440 to lysine 489.

This sequence belongs to the WD repeat DCAF13/WDSOF1 family. As to quaternary structure, interacts with snoRNA U3. Interacts with NOP1 and MPP10. Component of the ribosomal small subunit (SSU) processome composed of at least 40 protein subunits and snoRNA U3.

The protein resides in the nucleus. Its subcellular location is the nucleolus. Functionally, required for ribosomal RNA processing. The sequence is that of Protein SOF1 (SOF1) from Saccharomyces cerevisiae (strain ATCC 204508 / S288c) (Baker's yeast).